The following is a 69-amino-acid chain: DNA-directed RNA polymerase subunit omega (69 aa).

It belongs to the RNA polymerase subunit omega family. In terms of assembly, the RNAP catalytic core consists of 2 alpha, 1 beta, 1 beta' and 1 omega subunit. When a sigma factor is associated with the core the holoenzyme is formed, which can initiate transcription.

The catalysed reaction is RNA(n) + a ribonucleoside 5'-triphosphate = RNA(n+1) + diphosphate. Promotes RNA polymerase assembly. Latches the N- and C-terminal regions of the beta' subunit thereby facilitating its interaction with the beta and alpha subunits. The protein is DNA-directed RNA polymerase subunit omega of Symbiobacterium thermophilum (strain DSM 24528 / JCM 14929 / IAM 14863 / T).